A 219-amino-acid chain; its full sequence is Ribosome maturation factor RimP (219 aa).

Disordered stretches follow at residues 1–38 (MTQRGRAAKPTGPTGRPRRTGGQRGTDRVGRGGDLATR) and 189–219 (VEFTRPGEPDAFDGTDEAGDFDDDDVEDEER). Acidic residues predominate over residues 198–219 (DAFDGTDEAGDFDDDDVEDEER).

It belongs to the RimP family.

It localises to the cytoplasm. In terms of biological role, required for maturation of 30S ribosomal subunits. This chain is Ribosome maturation factor RimP, found in Salinispora arenicola (strain CNS-205).